Here is a 72-residue protein sequence, read N- to C-terminus: Conotoxin 3 (72 aa).

Residues 1–22 form the signal peptide; sequence MKLTCVVIVAVLLLTACQLITA. The propeptide occupies 23–46; it reads DDSRGTQEHRALRSDTKLSMLTLR. Disulfide bonds link cysteine 47/cysteine 61, cysteine 54/cysteine 64, and cysteine 60/cysteine 71.

Belongs to the conotoxin O1 superfamily. As to expression, expressed by the venom duct.

It localises to the secreted. This Conus striatus (Striated cone) protein is Conotoxin 3.